The sequence spans 58 residues: uncharacterized protein (58 aa).

A helical transmembrane segment spans residues 5–27 (FLHANITIIPHSVLYVSLSYYII).

Its subcellular location is the membrane. This is an uncharacterized protein from Saccharomyces cerevisiae (strain ATCC 204508 / S288c) (Baker's yeast).